We begin with the raw amino-acid sequence, 225 residues long: UPF0758 protein Sden_0326 (225 aa).

An MPN domain is found at 102–224 (ILTNPDLTRD…IVSFAERGWL (123 aa)). 3 residues coordinate Zn(2+): His173, His175, and Asp186. The JAMM motif signature appears at 173-186 (HNHPSGIAEPSQAD).

The protein belongs to the UPF0758 family.

The protein is UPF0758 protein Sden_0326 of Shewanella denitrificans (strain OS217 / ATCC BAA-1090 / DSM 15013).